Reading from the N-terminus, the 561-residue chain is 3-hydroxy-3-methylglutaryl-coenzyme A reductase 3 (561 aa).

A run of 2 helical transmembrane segments spans residues 25-45 (PIRH…AYLM) and 69-89 (IFGL…AFVQ). The tract at residues 90–145 (SIVSSSDDEEEDFLVGPARGSSAAAAVAPPPPPSSPAQCSLLGSPHDDAARERMPE) is linker. Positions 113 to 146 (AAAVAPPPPPSSPAQCSLLGSPHDDAARERMPEE) are disordered. Over residues 134–143 (PHDDAARERM) the composition is skewed to basic and acidic residues. Residues 146–561 (EDEEIVSSVV…SSKDMSKVIS (416 aa)) are catalytic. The Charge relay system role is filled by Glu-240. Asn-304 is a glycosylation site (N-linked (GlcNAc...) asparagine). Catalysis depends on charge relay system residues Lys-372 and Asp-448. His-546 acts as the Proton donor in catalysis. The N-linked (GlcNAc...) asparagine glycan is linked to Asn-550.

It belongs to the HMG-CoA reductase family.

The protein resides in the endoplasmic reticulum membrane. The catalysed reaction is (R)-mevalonate + 2 NADP(+) + CoA = (3S)-3-hydroxy-3-methylglutaryl-CoA + 2 NADPH + 2 H(+). The protein operates within metabolic intermediate biosynthesis; (R)-mevalonate biosynthesis; (R)-mevalonate from acetyl-CoA: step 3/3. In terms of biological role, catalyzes the synthesis of mevalonate. The specific precursor of all isoprenoid compounds present in plants. In Oryza sativa subsp. japonica (Rice), this protein is 3-hydroxy-3-methylglutaryl-coenzyme A reductase 3 (HMG3).